A 318-amino-acid polypeptide reads, in one-letter code: Aspartate carbamoyltransferase catalytic subunit (318 aa).

Residues Arg58 and Thr59 each contribute to the carbamoyl phosphate site. Lys86 serves as a coordination point for L-aspartate. Carbamoyl phosphate contacts are provided by Arg108, His141, and Gln144. L-aspartate contacts are provided by Arg174 and Arg226. Residues Gly270 and Pro271 each coordinate carbamoyl phosphate.

Belongs to the aspartate/ornithine carbamoyltransferase superfamily. ATCase family. In terms of assembly, heterododecamer (2C3:3R2) of six catalytic PyrB chains organized as two trimers (C3), and six regulatory PyrI chains organized as three dimers (R2).

It carries out the reaction carbamoyl phosphate + L-aspartate = N-carbamoyl-L-aspartate + phosphate + H(+). It functions in the pathway pyrimidine metabolism; UMP biosynthesis via de novo pathway; (S)-dihydroorotate from bicarbonate: step 2/3. Functionally, catalyzes the condensation of carbamoyl phosphate and aspartate to form carbamoyl aspartate and inorganic phosphate, the committed step in the de novo pyrimidine nucleotide biosynthesis pathway. This Lactobacillus delbrueckii subsp. bulgaricus (strain ATCC BAA-365 / Lb-18) protein is Aspartate carbamoyltransferase catalytic subunit.